The chain runs to 249 residues: 3-deoxy-D-manno-octulosonic acid kinase (249 aa).

The active site involves Asp-175.

This sequence belongs to the protein kinase superfamily. KdkA/RfaP family.

It localises to the cell inner membrane. The catalysed reaction is an alpha-Kdo-(2-&gt;6)-lipid IVA + ATP = a 4-O-phospho-alpha-Kdo-(2-&gt;6)-lipid IVA + ADP + H(+). The protein operates within bacterial outer membrane biogenesis; LPS core biosynthesis. Its function is as follows. Catalyzes the ATP-dependent phosphorylation of the 3-deoxy-D-manno-octulosonic acid (Kdo) residue in Kdo-lipid IV(A) at the 4-OH position. The chain is 3-deoxy-D-manno-octulosonic acid kinase from Xylella fastidiosa (strain M12).